Reading from the N-terminus, the 495-residue chain is Trigger factor (495 aa).

In terms of domain architecture, PPIase FKBP-type spans 169-254 (GDRVTIDYLG…VKEVAAPGEV (86 aa)). The interval 439–495 (ALLADDESEDKPAAKKAAPKKKAAKAEATEAAAEGEEAAVPKKKAAPKKKAAEDSAE) is disordered.

Belongs to the FKBP-type PPIase family. Tig subfamily.

Its subcellular location is the cytoplasm. It carries out the reaction [protein]-peptidylproline (omega=180) = [protein]-peptidylproline (omega=0). Functionally, involved in protein export. Acts as a chaperone by maintaining the newly synthesized protein in an open conformation. Functions as a peptidyl-prolyl cis-trans isomerase. This Rhizobium rhizogenes (strain K84 / ATCC BAA-868) (Agrobacterium radiobacter) protein is Trigger factor.